The sequence spans 207 residues: N-(5'-phosphoribosyl)anthranilate isomerase (207 aa).

It belongs to the TrpF family.

It catalyses the reaction N-(5-phospho-beta-D-ribosyl)anthranilate = 1-(2-carboxyphenylamino)-1-deoxy-D-ribulose 5-phosphate. Its pathway is amino-acid biosynthesis; L-tryptophan biosynthesis; L-tryptophan from chorismate: step 3/5. The polypeptide is N-(5'-phosphoribosyl)anthranilate isomerase (Geotalea daltonii (strain DSM 22248 / JCM 15807 / FRC-32) (Geobacter daltonii)).